The chain runs to 364 residues: MSRPLIADIDLDALRRNYCLARDQAPHSRAIAVVKADAYGHGAVACADALRDLAPAFAVACLEEALTLREAGITQPIVLLEGFFDAAELSLIDAHRLWTAVHSDWQIDALLAYRPRQPIPTWLKLDSGMHRLGFAPEAFEARWQRLAAATEHVTDLHLMTHFATADALDAAYFRRQMACIASLRQRLEAPVCLANSPATLAWPEAHGDWNRPGVMLYGSDPLEGANDASRALEPVMTLRSEIIAVRELAEGEAVGYGGRWRASRPSRIGVVAGGYGDGYDRHARDGTPVLVEGQRVPLAGKVSMDMLTVDLTELPEAGIGSPVVLWGEGLPIDEVARHCDTISYTLMTGVLPRVPRRYRNAETG.

Lysine 35 functions as the Proton acceptor; specific for D-alanine in the catalytic mechanism. An N6-(pyridoxal phosphate)lysine modification is found at lysine 35. Residue arginine 131 participates in substrate binding. Tyrosine 256 functions as the Proton acceptor; specific for L-alanine in the catalytic mechanism. A substrate-binding site is contributed by methionine 304.

It belongs to the alanine racemase family. Pyridoxal 5'-phosphate is required as a cofactor.

It catalyses the reaction L-alanine = D-alanine. The protein operates within amino-acid biosynthesis; D-alanine biosynthesis; D-alanine from L-alanine: step 1/1. Its function is as follows. Catalyzes the interconversion of L-alanine and D-alanine. May also act on other amino acids. This chain is Alanine racemase (alr), found in Chromohalobacter salexigens (strain ATCC BAA-138 / DSM 3043 / CIP 106854 / NCIMB 13768 / 1H11).